The following is a 157-amino-acid chain: uncharacterized protein (157 aa).

Residues 6–157 form the HTH marR-type domain; the sequence is HDELFQAIQQ…AFFNLWIKYM (152 aa). A DNA-binding region (H-T-H motif) is located at residues 66–89; that stretch reads NSFLASRLHISKAAVSKAVHALLK.

It localises to the cytoplasm. This is an uncharacterized protein from Bacillus subtilis (strain 168).